A 309-amino-acid polypeptide reads, in one-letter code: General transcription factor IIH subunit 3 (309 aa).

Residues 269 to 286 (CSVCLSIFCNFSPICTTC) form a C4-type zinc finger.

It belongs to the TFB4 family. In terms of assembly, part of a TFIID-containing RNA polymerase II pre-initiation complex that is composed of TBP and at least GTF2A1, GTF2A2, GTF2E1, GTF2E2, GTF2F1, GTF2H2, GTF2H3, GTF2H4, GTF2H5, GTF2B, TCEA1, ERCC2, ERCC3, TAF1, TAF2, TAF3, TAF4, TAF5, TAF6, TAF7, TAF8, TAF9, TAF10, TAF11, TAF12 and TAF13. Component of the 7-subunit TFIIH core complex composed of XPB/ERCC3, XPD/ERCC2, GTF2H1, GTF2H2, GTF2H3, GTF2H4 and GTF2H5, which is active in NER. The core complex associates with the 3-subunit CDK-activating kinase (CAK) module composed of CCNH/cyclin H, CDK7 and MNAT1 to form the 10-subunit holoenzyme (holo-TFIIH) active in transcription. Interacts with RARA; the interaction requires prior phosphorylation of RARA on 'Ser-369' which then enhances interaction of RARA with CDK7.

Its subcellular location is the nucleus. In terms of biological role, component of the general transcription and DNA repair factor IIH (TFIIH) core complex, which is involved in general and transcription-coupled nucleotide excision repair (NER) of damaged DNA and, when complexed to CAK, in RNA transcription by RNA polymerase II. In NER, TFIIH acts by opening DNA around the lesion to allow the excision of the damaged oligonucleotide and its replacement by a new DNA fragment. In transcription, TFIIH has an essential role in transcription initiation. When the pre-initiation complex (PIC) has been established, TFIIH is required for promoter opening and promoter escape. Phosphorylation of the C-terminal tail (CTD) of the largest subunit of RNA polymerase II by the kinase module CAK controls the initiation of transcription. This Rattus norvegicus (Rat) protein is General transcription factor IIH subunit 3 (Gtf2h3).